We begin with the raw amino-acid sequence, 205 residues long: Cytochrome c biogenesis ATP-binding export protein CcmA (205 aa).

The ABC transporter domain maps to 2 to 204 (LEVSNLTAIR…SPKLRKIKLG (203 aa)). Residue 34–41 (GRNGTGKT) coordinates ATP.

Belongs to the ABC transporter superfamily. CcmA exporter (TC 3.A.1.107) family. In terms of assembly, the complex is composed of two ATP-binding proteins (CcmA) and two transmembrane proteins (CcmB).

It localises to the cell inner membrane. It catalyses the reaction heme b(in) + ATP + H2O = heme b(out) + ADP + phosphate + H(+). Part of the ABC transporter complex CcmAB involved in the biogenesis of c-type cytochromes; once thought to export heme, this seems not to be the case, but its exact role is uncertain. Responsible for energy coupling to the transport system. In Vibrio parahaemolyticus serotype O3:K6 (strain RIMD 2210633), this protein is Cytochrome c biogenesis ATP-binding export protein CcmA.